We begin with the raw amino-acid sequence, 202 residues long: dITP/XTP pyrophosphatase (202 aa).

11–16 (TNNANK) serves as a coordination point for substrate. Aspartate 73 serves as the catalytic Proton acceptor. Aspartate 73 provides a ligand contact to Mg(2+). Residues serine 74, 155–158 (FGYD), lysine 178, and 183–184 (HR) contribute to the substrate site.

The protein belongs to the HAM1 NTPase family. As to quaternary structure, homodimer. The cofactor is Mg(2+).

It catalyses the reaction XTP + H2O = XMP + diphosphate + H(+). The catalysed reaction is dITP + H2O = dIMP + diphosphate + H(+). The enzyme catalyses ITP + H2O = IMP + diphosphate + H(+). In terms of biological role, pyrophosphatase that catalyzes the hydrolysis of nucleoside triphosphates to their monophosphate derivatives, with a high preference for the non-canonical purine nucleotides XTP (xanthosine triphosphate), dITP (deoxyinosine triphosphate) and ITP. Seems to function as a house-cleaning enzyme that removes non-canonical purine nucleotides from the nucleotide pool, thus preventing their incorporation into DNA/RNA and avoiding chromosomal lesions. The sequence is that of dITP/XTP pyrophosphatase from Lactiplantibacillus plantarum (strain ATCC BAA-793 / NCIMB 8826 / WCFS1) (Lactobacillus plantarum).